The sequence spans 765 residues: Alpha,alpha-trehalose phosphorylase (765 aa).

352–353 (WD) is a substrate binding site. Residue Glu-479 is the Proton donor of the active site. 591–592 (KQ) lines the substrate pocket.

Belongs to the glycosyl hydrolase 65 family. As to quaternary structure, homodimer.

The enzyme catalyses alpha,alpha-trehalose + phosphate = beta-D-glucose 1-phosphate + D-glucose. The protein operates within glycan degradation; trehalose degradation. Functionally, catalyzes the reversible phosphorolytic cleavage of trehalose. Phosphorolysis is specific for trehalose. The sequence is that of Alpha,alpha-trehalose phosphorylase (treP) from Geobacillus stearothermophilus (Bacillus stearothermophilus).